The chain runs to 1357 residues: MAYSYTEKKRIRKDFSKLPDVMDVPYLLAIQLDSYREFLQAGATKDQFRDVGLHAAFKSVFPIISYSGNAALEYVGYRLGEPAFDVKECVLRGVTYAVPLRVKVRLIIFDKESSNKAIKDIKEQEVYMGEIPLMTENGTFVINGTERVIVSQLHRSPGVFFDHDRGKTHSSGKLLYSARIIPYRGSWLDFEFDPKDCVFVRIDRRRKLPASVLLRALGYTTEQVLDAFYTTNVFSLKDETLSLELIASRLRGEIAVLDIQDEKGKVIVEAGRRITARHINQIEKAGIKSLDVPLDYVLGRTTAKVIVHPATGEILAECNTELNTEILAKIAKAQVVRIETLYTNDIDCGPFISDTLKIDSTSNQLEALVEIYRMMRPGEPPTKDAAETLFNNLFFSPERYDLSAVGRMKFNRRIGRTEIEGSGVLCKEDIVAVLKTLVDIRNGKGIVDDIDHLGNRRVRCVGEMAENQFRVGLVRVERAVKERLSMAESEGLMPQDLINAKPVAAAVKEFFGSSQLSQFMDQNNPLSEITHKRRVSALGPGGLTRERAGFEVRDVHPTHYGRVCPIETPEGPNIGLINSLAAYARTNQYGFLESPYRVVKDALVTDEIVFLSAIEEADHVIAQASATMNDKKVLIDELVAVRHLNEFTVKAPEDVTLMDVSPKQVVSVAASLIPFLEHDDANRALMGSNMQRQAVPTLRADKPLVGTGMERNVARDSGVCVVARRGGVIDSVDASRIVVRVADDEVETGEAGVDIYNLTKYTRSNQNTCINQRPLVRKGDRVQRSDIMADGPSTDMGELALGQNMRIAFMAWNGFNFEDSICLSERVVQEDRFTTIHIQELTCVARDTKLGPEEITADIPNVGEAALNKLDEAGIVYVGAEVGAGDILVGKVTPKGETQLTPEEKLLRAIFGEKASDVKDTSLRVPTGTKGTVIDVQVFTRDGVERDARALSIEKTQLDEIRKDLNEEFRIVEGATFERLRSALVGHKAEGGAGLKKGQDITDEILDGLEHGQWFKLRMAEDALNEQLEKAQAYIVDRRRLLDDKFEDKKRKLQQGDDLAPGVLKIVKVYLAIRRRIQPGDKMAGRHGNKGVVSVIMPVEDMPHDANGTPVDVVLNPLGVPSRMNVGQILETHLGLAAKGLGEKINRMIEEQRKVADLRKFLHEIYNEIGGRKEELDTFSDQEILDLAKNLRGGVPMATPVFDGAKESEIKAMLKLADLPESGQMQLFDGRTGNKFERPVTVGYMYMLKLNHLVDDKMHARSTGSYSLVTQQPLGGKAQFGGQRFGEMEVWALEAYGAAYTLQEMLTVKSDDVNGRTKMYKNIVDGDHRMEPGMPESFNVLIKEIRSLGIDIDLETE.

It belongs to the RNA polymerase beta chain family. As to quaternary structure, the RNAP catalytic core consists of 2 alpha, 1 beta, 1 beta' and 1 omega subunit. When a sigma factor is associated with the core the holoenzyme is formed, which can initiate transcription.

It carries out the reaction RNA(n) + a ribonucleoside 5'-triphosphate = RNA(n+1) + diphosphate. DNA-dependent RNA polymerase catalyzes the transcription of DNA into RNA using the four ribonucleoside triphosphates as substrates. The polypeptide is DNA-directed RNA polymerase subunit beta (Pseudomonas fluorescens (strain SBW25)).